Reading from the N-terminus, the 96-residue chain is Cytochrome c2 iso-2 (96 aa).

The heme c site is built by Cys-10, Cys-13, His-14, and Met-75.

It belongs to the cytochrome c family. Post-translationally, binds 1 heme c group covalently per subunit.

Cytochrome c2 is found mainly in purple, non-sulfur, photosynthetic bacteria where it functions as the electron donor to the oxidized bacteriochlorophyll in the photophosphorylation pathway. However, it may also have a role in the respiratory chain and is found in some non-photosynthetic bacteria. This chain is Cytochrome c2 iso-2, found in Magnetospirillum fulvum (Rhodospirillum fulvum).